A 79-amino-acid chain; its full sequence is UPF0654 protein C11D3.01c (79 aa).

Residues 1–79 (MPNPGNVIGG…RAQEELENLE (79 aa)) are disordered. Basic and acidic residues predominate over residues 22 to 45 (EETKQREKEYLEEHEGEVGEEHQK).

Belongs to the UPF0654 (con-6) family.

The sequence is that of UPF0654 protein C11D3.01c from Schizosaccharomyces pombe (strain 972 / ATCC 24843) (Fission yeast).